Reading from the N-terminus, the 820-residue chain is Protein bicaudal D homolog 2 (820 aa).

Serine 2 is modified (N-acetylserine). The stretch at 20 to 270 (EWLRAEVKRL…LSHYMSINDS (251 aa)) forms a coiled coil. Residues 25-400 (EVKRLSHELA…RLTENLSALR (376 aa)) are interaction with DYNLL1, DYNC1H1, DYNC1I2, DCTN1 and DCTN2. A phosphoserine mark is found at serine 190, serine 224, and serine 320. A disordered region spans residues 313-332 (SSLDNKTSTPRKDGLAPPSP). A Phosphothreonine modification is found at threonine 321. Residues 336-595 (SDLLSELHIS…LLATEVGRAD (260 aa)) are interaction with KIF5A. A coiled-coil region spans residues 340 to 539 (SELHISEIQK…VTFSEELANL (200 aa)). Serine 345 and serine 397 each carry phosphoserine. Disordered regions lie at residues 400–427 (RRLQ…GDYY), 563–582 (QGKA…PVLL), 591–618 (VGRA…DPRR), and 799–820 (HEQT…SPSL). Residues 404–424 (AGKERQTSLDNEKDRDSHEDG) show a composition bias toward basic and acidic residues. A phosphoserine mark is found at serine 570 and serine 578. The interaction with RANBP2 stretch occupies residues 586–820 (LLATEVGRAD…SKAKPASPSL (235 aa)). Threonine 598 bears the Phosphothreonine mark. The span at 602–614 (SPSPSSSLPSPLS) shows a compositional bias: low complexity. Residues 662–804 (DKDKEALMEE…LELDHEQTRR (143 aa)) adopt a coiled-coil conformation. The segment at 662 to 810 (DKDKEALMEE…QTRRGRSKAA (149 aa)) is interaction with RAB6A. The residue at position 819 (serine 819) is a Phosphoserine.

The protein belongs to the BicD family. In terms of assembly, part of a tripartite complex with dynein and dynactin, acts an adapter linking the dynein motor complex and dynactin. Interacts with CPNE4 (via VWFA domain). Interacts with NEK9. Interacts with DCTN2. Interacts with RAB6A. Interacts with DNAI1. Interacts with DYNLL1, DYNC1H1, DYNC1I2 and DCTN1. Forms a complex with dynein and dynactin. The dynein-dynactin-BICD2 ternary complex (DDB) binds preferentially to tyrosinated microtubules than to detyrosinated microtubules. Interacts with RANBP2, RAB6A and KIF5A. Interacts with KIF1C. Post-translationally, phosphorylated by NEK9 in vitro. Ubiquitously expressed with high expression in the spinal cord.

Its subcellular location is the golgi apparatus. The protein resides in the cytoplasm. It is found in the cytoskeleton. The protein localises to the nucleus. It localises to the nuclear pore complex. Its subcellular location is the nucleus envelope. Its function is as follows. Acts as an adapter protein linking the dynein motor complex to various cargos and converts dynein from a non-processive to a highly processive motor in the presence of dynactin. Facilitates and stabilizes the interaction between dynein and dynactin and activates dynein processivity (the ability to move along a microtubule for a long distance without falling off the track). Facilitates the binding of RAB6A to the Golgi by stabilizing its GTP-bound form. Regulates coat complex coatomer protein I (COPI)-independent Golgi-endoplasmic reticulum transport via its interaction with RAB6A and recruitment of the dynein-dynactin motor complex. Contributes to nuclear and centrosomal positioning prior to mitotic entry through regulation of both dynein and kinesin-1. During G2 phase of the cell cycle, associates with RANBP2 at the nuclear pores and recruits dynein and dynactin to the nuclear envelope to ensure proper positioning of the nucleus relative to centrosomes prior to the onset of mitosis. This is Protein bicaudal D homolog 2 (Bicd2) from Mus musculus (Mouse).